A 356-amino-acid polypeptide reads, in one-letter code: Phospho-N-acetylmuramoyl-pentapeptide-transferase (356 aa).

Helical transmembrane passes span 25–45, 70–90, 93–113, 138–158, 164–184, 195–215, 232–252, 258–278, 284–304, and 333–353; these read TVAA…SIIS, GTPT…ALLW, LFNI…AIGF, FLVA…GLAL, YFIN…VGLG, GLAI…AYLS, VGEL…FLWF, AIFM…IVSV, IVLI…IIQV, and QIVV…LSTL.

This sequence belongs to the glycosyltransferase 4 family. MraY subfamily. It depends on Mg(2+) as a cofactor.

Its subcellular location is the cell inner membrane. The catalysed reaction is UDP-N-acetyl-alpha-D-muramoyl-L-alanyl-gamma-D-glutamyl-meso-2,6-diaminopimeloyl-D-alanyl-D-alanine + di-trans,octa-cis-undecaprenyl phosphate = di-trans,octa-cis-undecaprenyl diphospho-N-acetyl-alpha-D-muramoyl-L-alanyl-D-glutamyl-meso-2,6-diaminopimeloyl-D-alanyl-D-alanine + UMP. It participates in cell wall biogenesis; peptidoglycan biosynthesis. Catalyzes the initial step of the lipid cycle reactions in the biosynthesis of the cell wall peptidoglycan: transfers peptidoglycan precursor phospho-MurNAc-pentapeptide from UDP-MurNAc-pentapeptide onto the lipid carrier undecaprenyl phosphate, yielding undecaprenyl-pyrophosphoryl-MurNAc-pentapeptide, known as lipid I. The polypeptide is Phospho-N-acetylmuramoyl-pentapeptide-transferase (Bartonella bacilliformis (strain ATCC 35685 / KC583 / Herrer 020/F12,63)).